A 438-amino-acid polypeptide reads, in one-letter code: UDP-N-acetylmuramoylalanine--D-glutamate ligase (438 aa).

112–118 (GSNGKST) provides a ligand contact to ATP.

This sequence belongs to the MurCDEF family.

The protein resides in the cytoplasm. It carries out the reaction UDP-N-acetyl-alpha-D-muramoyl-L-alanine + D-glutamate + ATP = UDP-N-acetyl-alpha-D-muramoyl-L-alanyl-D-glutamate + ADP + phosphate + H(+). Its pathway is cell wall biogenesis; peptidoglycan biosynthesis. Cell wall formation. Catalyzes the addition of glutamate to the nucleotide precursor UDP-N-acetylmuramoyl-L-alanine (UMA). The sequence is that of UDP-N-acetylmuramoylalanine--D-glutamate ligase from Sodalis glossinidius (strain morsitans).